The sequence spans 156 residues: E3 ubiquitin-protein ligase LAP (156 aa).

The segment at 1 to 55 adopts an RING-CH-type zinc-finger fold; that stretch reads MSDICWICNDVCDERNNFCGCNEEYKVVHIKCMQLWINYSKKKECNLCKTKYNIK. The Cytoplasmic portion of the chain corresponds to 1–73; that stretch reads MSDICWICND…WNWCFNDKKT (73 aa). Residues Cys5, Cys8, Cys19, Cys21, His29, Cys32, Cys45, and Cys48 each contribute to the Zn(2+) site. A helical transmembrane segment spans residues 74 to 94; it reads TLFKIFFILFALVFIFLTITL. Residues 95 to 111 are Lumenal-facing; it reads SNDMANLVTGINDLICS. Residues 112–132 form a helical membrane-spanning segment; sequence IIFLIVYTVVMLTSICFSVFV. At 133–156 the chain is on the cytoplasmic side; that stretch reads VAIVVDFLLEAKEKNSFLTIREIV.

It belongs to the poxviridae LAP protein family.

It localises to the host membrane. The protein resides in the host Golgi apparatus. The protein localises to the host trans-Golgi network membrane. Its subcellular location is the host early endosome membrane. The enzyme catalyses S-ubiquitinyl-[E2 ubiquitin-conjugating enzyme]-L-cysteine + [acceptor protein]-L-lysine = [E2 ubiquitin-conjugating enzyme]-L-cysteine + N(6)-ubiquitinyl-[acceptor protein]-L-lysine.. Functionally, E3 ubiquitin-protein ligase which promotes ubiquitination and subsequent degradation of host MHC-I and CD4 molecules, presumably to prevent lysis of infected cells by cytotoxic T-lymphocytes and NK cell. Binds target molecules through transmembrane interaction. The result of this ubiquitination is the enhancement of the endocytosis of the target chain and the delivery to the lysosome, where it is proteolytically destroyed. This Yaba-like disease virus (YLDV) protein is E3 ubiquitin-protein ligase LAP.